Here is a 252-residue protein sequence, read N- to C-terminus: Probable transcriptional regulatory protein THA_1246 (252 aa).

This sequence belongs to the TACO1 family.

Its subcellular location is the cytoplasm. The sequence is that of Probable transcriptional regulatory protein THA_1246 from Thermosipho africanus (strain TCF52B).